The following is a 183-amino-acid chain: Mitochondrial inner membrane protease subunit 2 (183 aa).

The helical transmembrane segment at 13–35 (AFVSGFFVAVPVTVTVLDRLAYV) threads the bilayer. Catalysis depends on residues S42 and K90. The interval 161 to 183 (SVPPDRRPLLNWDRAAEDKYDDD) is disordered. The segment covering 164–183 (PDRRPLLNWDRAAEDKYDDD) has biased composition (basic and acidic residues).

This sequence belongs to the peptidase S26 family. IMP2 subfamily. In terms of assembly, heterodimer of 2 subunits, IMMPL1 and IMMPL2.

The protein resides in the mitochondrion inner membrane. Its function is as follows. Catalyzes the removal of transit peptides required for the targeting of proteins from the mitochondrial matrix, across the inner membrane, into the inter-membrane space. The protein is Mitochondrial inner membrane protease subunit 2 (immp2l) of Danio rerio (Zebrafish).